The following is a 67-amino-acid chain: Protein Tpau_2998 (67 aa).

This chain is Protein Tpau_2998, found in Tsukamurella paurometabola (strain ATCC 8368 / DSM 20162 / CCUG 35730 / CIP 100753 / JCM 10117 / KCTC 9821 / NBRC 16120 / NCIMB 702349 / NCTC 13040) (Corynebacterium paurometabolum).